Here is a 191-residue protein sequence, read N- to C-terminus: uncharacterized protein (191 aa).

Helical transmembrane passes span Ile4–Phe24, Lys26–Cys46, Gly68–Ile88, Ala90–Ile110, Leu135–Ile155, and Leu168–Met188.

The protein localises to the cell membrane. This is an uncharacterized protein from Methanocaldococcus jannaschii (strain ATCC 43067 / DSM 2661 / JAL-1 / JCM 10045 / NBRC 100440) (Methanococcus jannaschii).